A 261-amino-acid chain; its full sequence is MIYKCPMCREFFSERADLFMHQKIHTAEKPHKCDKCDKGFFHISELHIHWRDHTGEKVYKCDDCGKDFSTTTKLNRHKKIHTVEKPYKCYECGKAFNWSSHLQIHMRVHTGEKPYVCSECGRGFSNSSNLCMHQRVHTGEKPFKCEECGKAFRHTSSLCMHQRVHTGEKPYKCYECGKAFSQSSSLCIHQRVHTGEKPYRCCGCGKAFSQSSSLCIHQRVHTGEKPFKCDECGKAFSQSTSLCIHQRVHTKERNHLKISVI.

9 C2H2-type zinc fingers span residues Tyr-3–His-25, His-31–His-53, Tyr-59–His-81, Tyr-87–His-109, Tyr-115–His-137, Phe-143–His-165, Tyr-171–His-193, Tyr-199–His-221, and Phe-227–His-249. Lys-257 participates in a covalent cross-link: Glycyl lysine isopeptide (Lys-Gly) (interchain with G-Cter in SUMO2).

This sequence belongs to the krueppel C2H2-type zinc-finger protein family.

It localises to the nucleus. In terms of biological role, may be involved in transcriptional regulation. This is Zinc finger protein 664 from Homo sapiens (Human).